Consider the following 183-residue polypeptide: Guanylate kinase (183 aa).

A Guanylate kinase-like domain is found at 4 to 182; the sequence is GRVVVLTGPS…AITALEAAIF (179 aa). 11–18 contributes to the ATP binding site; sequence GPSGVGKG.

This sequence belongs to the guanylate kinase family.

Its subcellular location is the cytoplasm. It carries out the reaction GMP + ATP = GDP + ADP. The catalysed reaction is dZMP + ATP = dZDP + ADP. The protein operates within purine metabolism. Its function is as follows. Essential for recycling GMP and indirectly, cGMP. (Microbial infection) Catalyzes the phosphorylation of dZMP to dZDP, when the bacterium is infected by a phage that produces the substrate for the synthesis of dZTP (2- amino-2'-deoxyadenosine 5'-triphosphate), which is then used by the phage as a DNA polymerase substrate. The protein is Guanylate kinase of Synechococcus sp. (strain ATCC 27144 / PCC 6301 / SAUG 1402/1) (Anacystis nidulans).